The chain runs to 99 residues: UPF0235 protein PM1313 (99 aa).

The protein belongs to the UPF0235 family.

This Pasteurella multocida (strain Pm70) protein is UPF0235 protein PM1313.